The chain runs to 335 residues: DDRGK domain-containing protein 1 (335 aa).

The Lumenal segment spans residues 1 to 6 (MGDTYS). A helical transmembrane segment spans residues 7-27 (LVLVAGYLSIFLFIGAIGYFY). At 28–335 (LSKPRIPSSN…NNDQDPVDTN (308 aa)) the chain is on the cytoplasmic side. The disordered stretch occupies residues 37–124 (NVNEQQQQQQ…GEDIGVVAPG (88 aa)). Composition is skewed to low complexity over residues 41–56 (QQQQQQQQQQQQQQPQ) and 91–103 (SSGSDSDNSTNSD). Positions 104 to 117 (NYDDDNGQEGEGED) are enriched in acidic residues.

The protein belongs to the DDRGK1 family.

The protein localises to the endoplasmic reticulum membrane. In terms of biological role, substrate adapter for ufmylation, the covalent attachment of the ubiquitin-like modifier UFM1 to substrate proteins. This Dictyostelium discoideum (Social amoeba) protein is DDRGK domain-containing protein 1.